The chain runs to 67 residues: Conotoxin Im3.1 (67 aa).

The first 20 residues, 1 to 20, serve as a signal peptide directing secretion; sequence MMSTLVVLLTICLLMLPLTA. Residues 21–52 constitute a propeptide that is removed on maturation; the sequence is RQLDADQLADQLAERMEDISADQNRWFDPVKR. 3 disulfides stabilise this stretch: Cys-53–Cys-63, Cys-54–Cys-61, and Cys-59–Cys-64.

It belongs to the conotoxin M superfamily. In terms of tissue distribution, expressed by the venom duct.

It is found in the secreted. Probable neurotoxin. This is Conotoxin Im3.1 from Conus imperialis (Imperial cone).